A 359-amino-acid polypeptide reads, in one-letter code: 4-dedimethylamino-4-oxo-anhydrotetracycline transaminase OxyQ (359 aa).

Gly-32, Lys-92, and Asn-155 together coordinate substrate. Pyridoxal 5'-phosphate contacts are provided by residues Thr-91–Lys-92, Asn-155, Tyr-186, and Ser-216–Ser-218. Lys-219 bears the N6-(pyridoxal phosphate)lysine mark. Arg-227 is a pyridoxal 5'-phosphate binding site. Substrate is bound at residue Arg-341.

The protein belongs to the class-I pyridoxal-phosphate-dependent aminotransferase family. Pyridoxal 5'-phosphate serves as cofactor.

It participates in antibiotic biosynthesis; oxytetracycline biosynthesis. Its function is as follows. Involved in the biosynthesis of the tetracycline antibiotic, oxytetracycline. Catalyzes the conversion of 4-dedimethylamino-4-oxoanhydrotetracycline to yield 4-amino-4-de(dimethylamino)anhydrotetracycline (4-amino-ATC). The chain is 4-dedimethylamino-4-oxo-anhydrotetracycline transaminase OxyQ from Streptomyces rimosus.